The following is a 333-amino-acid chain: Transcription termination factor MTERF6, chloroplastic/mitochondrial (333 aa).

It belongs to the mTERF family.

It localises to the plastid. It is found in the chloroplast. The protein localises to the mitochondrion. Its function is as follows. Transcription termination factor essential for chloroplast development. Required for maturation of 16S rRNA, 18S rRNA and 23S rRNA in the chloroplast. Binds to a specific region within the tRNA(Ile)(GAU) gene at a position adjacent to and downstream of the 16S rRNA gene. Required for the maturation of tRNA(Ile)(GAU). Binds to double-stranded DNA. In Arabidopsis thaliana (Mouse-ear cress), this protein is Transcription termination factor MTERF6, chloroplastic/mitochondrial.